Reading from the N-terminus, the 58-residue chain is MTGSGTPSQGKKNKTVHVKCRRCGEKSYHVKKERCSSCGFGDSASRRGYAWQSKSGDN.

Cys20, Cys23, Cys35, and Cys38 together coordinate Zn(2+). The C4-type zinc-finger motif lies at 20–38; the sequence is CRRCGEKSYHVKKERCSSC. The tract at residues 39 to 58 is disordered; the sequence is GFGDSASRRGYAWQSKSGDN.

This sequence belongs to the eukaryotic ribosomal protein eL37 family. The cofactor is Zn(2+).

Binds to the 23S rRNA. This is Large ribosomal subunit protein eL37 from Halorubrum lacusprofundi (strain ATCC 49239 / DSM 5036 / JCM 8891 / ACAM 34).